A 237-amino-acid chain; its full sequence is Intracellular ribonuclease LX (237 aa).

A propeptide spanning residues 1–24 (MMKSQKKLLIKIIVVQCLLVLCVT) is cleaved from the precursor. Gln36 is a binding site for RNA. A disulfide bridge links Cys42 with Cys48. RNA contacts are provided by residues His63, Phe113, 116-117 (HE), and 120-121 (KH). His63 acts as the Proton donor in catalysis. Cystine bridges form between Cys78–Cys124, Cys183–Cys219, and Cys199–Cys210. Glu117 is an active-site residue. His121 functions as the Proton acceptor in the catalytic mechanism.

It belongs to the RNase T2 family.

It localises to the cytoplasm. The catalysed reaction is a ribonucleotidyl-ribonucleotide-RNA + H2O = a 3'-end 3'-phospho-ribonucleotide-RNA + a 5'-end dephospho-ribonucleoside-RNA + H(+). This is Intracellular ribonuclease LX (RNALX) from Solanum lycopersicum (Tomato).